A 272-amino-acid polypeptide reads, in one-letter code: Putative phosphoenolpyruvate synthase regulatory protein (272 aa).

152 to 159 contacts ADP; that stretch reads GVSRCGKT.

It belongs to the pyruvate, phosphate/water dikinase regulatory protein family. PSRP subfamily.

It carries out the reaction [pyruvate, water dikinase] + ADP = [pyruvate, water dikinase]-phosphate + AMP + H(+). It catalyses the reaction [pyruvate, water dikinase]-phosphate + phosphate + H(+) = [pyruvate, water dikinase] + diphosphate. Functionally, bifunctional serine/threonine kinase and phosphorylase involved in the regulation of the phosphoenolpyruvate synthase (PEPS) by catalyzing its phosphorylation/dephosphorylation. This Pseudomonas savastanoi pv. phaseolicola (strain 1448A / Race 6) (Pseudomonas syringae pv. phaseolicola (strain 1448A / Race 6)) protein is Putative phosphoenolpyruvate synthase regulatory protein.